A 688-amino-acid polypeptide reads, in one-letter code: MQDIQLDKRLSELLSQAVTPHNAQPLMQALCQSLNEHNIRYYVDDAPSITDSEYDRLMQRLKQLEAEYPQFVAADSPTQRVGGMALAKFEQITHLKPMLSLDNAFDEADFSAFHKRVSDRVGEVSFCCEPKLDGLAVSILYRNGVLERAATRGDGTVGEDITENVKTIKSIPLKLRGDNYPELVEVRGEAFMPKAAFEALNERARLKDEKLFVNPRNAAAGSLRQLDSKITASRALSFYAYALGVVEPTSHELAKTHYEQLQQLKSWGLPVSSEIKVCDELSQVFAYYQDILTRRSYLPFEIDGVVMKVNDIAQQQTLGFVAKSPRWAIAYKFPAQEEMTLLEGVDFQVGRTGAVTPVARLKPVFVGGVTVSNATLHNADEIERLGVMVGDTVIIRRAGDVIPQIVAIVPERRPEDAKAIAFPQHCPVCGSLVERLEGEAVTRCSGGLFCEAQRKEAIKHFASRKALDIDGMGDKIVEQLIDKELVQSPADLFKLPASMMTMLDRMGMKSATNLAQAIEAAKTTTLPRFLYALGIREVGEATASNLATHFGSLEALRVATIEQLIQVEDIGEVVAQHVAHFFAQPHNLEVIDALIAAGVNWPTIAAPSADEQPLKGQTWVLTGTLNQLNRNDAKAQLQALGAKVAGSVSKNTDCLVAGEAAGSKLAKAQELGVKVIGEDELLALLANS.

NAD(+) contacts are provided by residues 51–55 (DSEYD), 100–101 (SL), and E129. K131 acts as the N6-AMP-lysine intermediate in catalysis. R152, E189, K308, and K332 together coordinate NAD(+). Zn(2+) contacts are provided by C426, C429, C444, and C450. Positions 609–688 (ADEQPLKGQT…DELLALLANS (80 aa)) constitute a BRCT domain.

This sequence belongs to the NAD-dependent DNA ligase family. LigA subfamily. It depends on Mg(2+) as a cofactor. Requires Mn(2+) as cofactor.

It carries out the reaction NAD(+) + (deoxyribonucleotide)n-3'-hydroxyl + 5'-phospho-(deoxyribonucleotide)m = (deoxyribonucleotide)n+m + AMP + beta-nicotinamide D-nucleotide.. Functionally, DNA ligase that catalyzes the formation of phosphodiester linkages between 5'-phosphoryl and 3'-hydroxyl groups in double-stranded DNA using NAD as a coenzyme and as the energy source for the reaction. It is essential for DNA replication and repair of damaged DNA. In Shewanella sp. (strain MR-4), this protein is DNA ligase.